Consider the following 51-residue polypeptide: Bacteriocin aureocin A53 (51 aa).

Position 1 is an N-formylmethionine (methionine 1).

The protein resides in the secreted. Antibacterial peptide active against a broad range of lactic acid bacteria, L.monocytogenes and many epidemiologically unrelated strains of S.aureus involved in bovine mastitis. The protein is Bacteriocin aureocin A53 (aucA) of Staphylococcus aureus.